Here is a 141-residue protein sequence, read N- to C-terminus: Hemoglobin subunit alpha (141 aa).

In terms of domain architecture, Globin spans 1–141 (VLSPADKTNV…VSTVLTSKYR (141 aa)). A Phosphoserine modification is found at Ser3. Position 7 is an N6-succinyllysine (Lys7). Thr8 bears the Phosphothreonine mark. Lys11 carries the post-translational modification N6-succinyllysine. Lys16 is modified (N6-acetyllysine; alternate). Lys16 carries the post-translational modification N6-succinyllysine; alternate. Tyr24 is modified (phosphotyrosine). Ser35 carries the phosphoserine modification. Lys40 carries the N6-succinyllysine modification. At Ser49 the chain carries Phosphoserine. His58 serves as a coordination point for O2. His87 contributes to the heme b binding site. Ser102 bears the Phosphoserine mark. At Thr108 the chain carries Phosphothreonine. Phosphoserine occurs at positions 124 and 131. Phosphothreonine is present on residues Thr134 and Thr137. Ser138 is subject to Phosphoserine.

This sequence belongs to the globin family. As to quaternary structure, heterotetramer of two alpha chains and two beta chains. As to expression, red blood cells.

Involved in oxygen transport from the lung to the various peripheral tissues. In terms of biological role, hemopressin acts as an antagonist peptide of the cannabinoid receptor CNR1. Hemopressin-binding efficiently blocks cannabinoid receptor CNR1 and subsequent signaling. This Gorilla gorilla gorilla (Western lowland gorilla) protein is Hemoglobin subunit alpha (HBA).